A 103-amino-acid polypeptide reads, in one-letter code: Small ribosomal subunit protein uS10 (103 aa).

This sequence belongs to the universal ribosomal protein uS10 family. Part of the 30S ribosomal subunit.

Its function is as follows. Involved in the binding of tRNA to the ribosomes. This Shewanella frigidimarina (strain NCIMB 400) protein is Small ribosomal subunit protein uS10.